We begin with the raw amino-acid sequence, 267 residues long: Cell division protein FtsQ (267 aa).

The Cytoplasmic segment spans residues 1–32 (MRQKTISNKNKQTKNTNNISLRRKLGLMYKKA). The helical transmembrane segment at 33 to 53 (ILVLKIVLMIFVCLFVFTKYF) threads the bilayer. Topologically, residues 54–267 (TSIKTYLITN…DRNKYYIQKY (214 aa)) are periplasmic. The region spanning 73–141 (FRLENVIIEG…NTVYIKLFER (69 aa)) is the POTRA domain.

It belongs to the FtsQ/DivIB family. FtsQ subfamily.

It is found in the cell inner membrane. Its function is as follows. Essential cell division protein. The sequence is that of Cell division protein FtsQ from Rickettsia prowazekii (strain Madrid E).